We begin with the raw amino-acid sequence, 267 residues long: Electron transfer flavoprotein subunit beta (267 aa).

It belongs to the ETF beta-subunit/FixA family. In terms of assembly, heterodimer of an alpha and a beta subunit.

Functionally, participates in the electron transfer process during N,N-dimethylglycine (DMG) degradation to sarcosine. In Chromohalobacter salexigens (strain ATCC BAA-138 / DSM 3043 / CIP 106854 / NCIMB 13768 / 1H11), this protein is Electron transfer flavoprotein subunit beta.